The chain runs to 171 residues: Large ribosomal subunit protein uL10 (171 aa).

It belongs to the universal ribosomal protein uL10 family. In terms of assembly, part of the ribosomal stalk of the 50S ribosomal subunit. The N-terminus interacts with L11 and the large rRNA to form the base of the stalk. The C-terminus forms an elongated spine to which L12 dimers bind in a sequential fashion forming a multimeric L10(L12)X complex.

Its function is as follows. Forms part of the ribosomal stalk, playing a central role in the interaction of the ribosome with GTP-bound translation factors. This Corynebacterium glutamicum (strain R) protein is Large ribosomal subunit protein uL10.